Reading from the N-terminus, the 604-residue chain is Glucose oxidase (604 aa).

Positions 1–18 (MKSTIITSILFSVATVQA) are cleaved as a signal peptide. Residues Leu52, Thr53, and Glu73 each coordinate FAD. Asn111 is a glycosylation site (N-linked (GlcNAc...) asparagine). Residues Ser125, Asn129, Gly130, and Ser132 each coordinate FAD. The cysteines at positions 186 and 228 are disulfide-linked. Asn213 carries an N-linked (GlcNAc...) asparagine glycan. Val272 contributes to the FAD binding site. N-linked (GlcNAc...) asparagine glycosylation is found at Asn278, Asn409, and Asn531. His537 (proton acceptor) is an active-site residue. 2 residues coordinate O2: Lys558 and Val559. Positions 570 and 582 each coordinate FAD.

It belongs to the GMC oxidoreductase family. Homodimer. The cofactor is FAD.

The protein resides in the secreted. The protein localises to the cell wall. It is found in the cytoplasm. It localises to the extracellular space. Its subcellular location is the extracellular matrix. It catalyses the reaction beta-D-glucose + O2 = D-glucono-1,5-lactone + H2O2. Functionally, glucose oxidase catalyzes the oxidation of beta-D-glucose to D-glucono-delta-lactone and hydrogen peroxide in the presence of molecular oxygen. The enzyme also catalyzes the reaction with D-xylose but at a much lower rate. Shows any activities against D-fructose, D-galactose and D-arabinose. The enzyme is cytotoxic for a series of bacteria, yeasts and filamentous fungi and acts primarily via the liberation of H(2)O(2), which is a harmful oxidative stress-generating agent. The protein is Glucose oxidase of Penicillium chrysogenum (Penicillium notatum).